We begin with the raw amino-acid sequence, 78 residues long: Large ribosomal subunit protein bL31 (78 aa).

This sequence belongs to the bacterial ribosomal protein bL31 family. Type A subfamily. As to quaternary structure, part of the 50S ribosomal subunit.

Its function is as follows. Binds the 23S rRNA. The sequence is that of Large ribosomal subunit protein bL31 (rpmE) from Rickettsia felis (strain ATCC VR-1525 / URRWXCal2) (Rickettsia azadi).